The following is a 184-amino-acid chain: Large ribosomal subunit protein uL6 (184 aa).

This sequence belongs to the universal ribosomal protein uL6 family. In terms of assembly, part of the 50S ribosomal subunit.

In terms of biological role, this protein binds to the 23S rRNA, and is important in its secondary structure. It is located near the subunit interface in the base of the L7/L12 stalk, and near the tRNA binding site of the peptidyltransferase center. In Desulfitobacterium hafniense (strain Y51), this protein is Large ribosomal subunit protein uL6.